Here is a 1234-residue protein sequence, read N- to C-terminus: Complement factor H (1234 aa).

The signal sequence occupies residues 1–18 (MRLSARIIWLILWTVCAA). Sushi domains follow at residues 19 to 82 (EDCK…ICRK), 83 to 143 (KPCG…LCEV), 144 to 207 (VKCL…RCVE), 208 to 264 (ILCT…FCEE), 265 to 322 (KRCS…RCTL), 324 to 386 (PCEF…VPCV), 387 to 444 (RKCV…KCIR), 446 to 507 (KTCS…SCIK), 508 to 566 (SCDM…SCYE), 567 to 624 (RECS…TCKG), 627 to 685 (ASCA…VCIE), 688 to 745 (RTCG…KCVA), 750 to 804 (EKCR…NCTS), 806 to 863 (TSCP…RCIE), 865 to 933 (IPCS…RCVG), 934 to 991 (LPCG…KCIK), 992 to 1050 (TDCD…VCKD), 1051 to 1109 (NSCV…KCRD), 1112 to 1170 (GKCG…TCLH), and 1171 to 1234 (ACVI…PTCV). 40 disulfide bridges follow: Cys-21-Cys-66, Cys-52-Cys-80, Cys-85-Cys-129, Cys-114-Cys-141, Cys-146-Cys-192, Cys-178-Cys-205, Cys-210-Cys-251, Cys-237-Cys-262, Cys-267-Cys-309, Cys-294-Cys-320, Cys-325-Cys-374, Cys-357-Cys-385, Cys-389-Cys-431, Cys-416-Cys-442, Cys-448-Cys-494, Cys-477-Cys-505, Cys-509-Cys-553, Cys-536-Cys-564, Cys-569-Cys-610, Cys-597-Cys-622, Cys-629-Cys-672, Cys-658-Cys-683, Cys-690-Cys-732, Cys-718-Cys-743, Cys-752-Cys-791, Cys-780-Cys-802, Cys-808-Cys-850, Cys-836-Cys-861, Cys-867-Cys-920, Cys-906-Cys-931, Cys-936-Cys-978, Cys-964-Cys-989, Cys-994-Cys-1037, Cys-1023-Cys-1048, Cys-1053-Cys-1096, Cys-1082-Cys-1107, Cys-1114-Cys-1157, Cys-1143-Cys-1168, Cys-1172-Cys-1223, and Cys-1206-Cys-1233. N-linked (GlcNAc...) asparagine glycans are attached at residues Asn-676, Asn-721, Asn-773, and Asn-801. Residues 872 to 896 (TIEHGSINLPRSSEERRDSIESSSH) form a disordered region. The segment covering 883-896 (SSEERRDSIESSSH) has biased composition (basic and acidic residues). N-linked (GlcNAc...) asparagine glycosylation is found at Asn-1030 and Asn-1061. Position 1198 is a phosphoserine (Ser-1198). Asn-1225 carries an N-linked (GlcNAc...) asparagine glycan.

As to quaternary structure, homodimer. Also forms homooligomers. Interacts with complement protein C3b; this interaction inhibits complement activation. Interacts with complement protein C3d. Interacts with CR3/ITGAM; this interaction mediates adhesion of neutrophils to pathogens leading to pathogen clearance. In terms of processing, sulfated on tyrosine residues. CFH is one of the most abundant complement components in blood where the liver is the major source of CFH protein in vivo. in addition, CFH is secreted by additional cell types including monocytes, fibroblasts, or endothelial cells.

The protein resides in the secreted. In terms of biological role, glycoprotein that plays an essential role in maintaining a well-balanced immune response by modulating complement activation. Acts as a soluble inhibitor of complement, where its binding to self markers such as glycan structures prevents complement activation and amplification on cell surfaces. Accelerates the decay of the complement alternative pathway (AP) C3 convertase C3bBb, thus preventing local formation of more C3b, the central player of the complement amplification loop. As a cofactor of the serine protease factor I, CFH also regulates proteolytic degradation of already-deposited C3b. In addition, mediates several cellular responses through interaction with specific receptors. For example, interacts with CR3/ITGAM receptor and thereby mediates the adhesion of human neutrophils to different pathogens. In turn, these pathogens are phagocytosed and destroyed. The polypeptide is Complement factor H (Cfh) (Mus musculus (Mouse)).